The sequence spans 142 residues: Large ribosomal subunit protein uL11 (142 aa).

The protein belongs to the universal ribosomal protein uL11 family. As to quaternary structure, part of the ribosomal stalk of the 50S ribosomal subunit. Interacts with L10 and the large rRNA to form the base of the stalk. L10 forms an elongated spine to which L12 dimers bind in a sequential fashion forming a multimeric L10(L12)X complex. One or more lysine residues are methylated.

Its function is as follows. Forms part of the ribosomal stalk which helps the ribosome interact with GTP-bound translation factors. The sequence is that of Large ribosomal subunit protein uL11 from Solibacter usitatus (strain Ellin6076).